The following is a 306-amino-acid chain: D-alanine--D-alanine ligase (306 aa).

Residues 101-303 form the ATP-grasp domain; it reads KQVWQAVGLP…FSQLVVKILE (203 aa). 134–189 serves as a coordination point for ATP; that stretch reads FTHLGLPLIVKPSREGSSVGMSKVNTLSDLPAALEEAFRHDDDVLVEKWLSGPEYT. Mg(2+) is bound by residues Asp257, Glu270, and Asn272.

It belongs to the D-alanine--D-alanine ligase family. The cofactor is Mg(2+). It depends on Mn(2+) as a cofactor.

It localises to the cytoplasm. It catalyses the reaction 2 D-alanine + ATP = D-alanyl-D-alanine + ADP + phosphate + H(+). Its pathway is cell wall biogenesis; peptidoglycan biosynthesis. Functionally, cell wall formation. This Pectobacterium atrosepticum (strain SCRI 1043 / ATCC BAA-672) (Erwinia carotovora subsp. atroseptica) protein is D-alanine--D-alanine ligase.